A 227-amino-acid polypeptide reads, in one-letter code: 7-cyano-7-deazaguanine synthase (227 aa).

ATP is bound at residue 10–20; it reads LSGGLDSCVAT. Zn(2+) is bound by residues cysteine 193, cysteine 201, cysteine 204, and cysteine 207.

This sequence belongs to the QueC family. It depends on Zn(2+) as a cofactor.

It carries out the reaction 7-carboxy-7-deazaguanine + NH4(+) + ATP = 7-cyano-7-deazaguanine + ADP + phosphate + H2O + H(+). The protein operates within purine metabolism; 7-cyano-7-deazaguanine biosynthesis. Functionally, catalyzes the ATP-dependent conversion of 7-carboxy-7-deazaguanine (CDG) to 7-cyano-7-deazaguanine (preQ(0)). The chain is 7-cyano-7-deazaguanine synthase from Methanobrevibacter smithii (strain ATCC 35061 / DSM 861 / OCM 144 / PS).